Reading from the N-terminus, the 966-residue chain is Phosphoenolpyruvate carboxylase (966 aa).

Serine 10 is subject to Phosphoserine. Residues histidine 171 and lysine 601 contribute to the active site.

The protein belongs to the PEPCase type 1 family. In terms of assembly, homotetramer. It depends on Mg(2+) as a cofactor.

It is found in the cytoplasm. It carries out the reaction oxaloacetate + phosphate = phosphoenolpyruvate + hydrogencarbonate. With respect to regulation, by light-reversible phosphorylation. In terms of biological role, through the carboxylation of phosphoenolpyruvate (PEP) it forms oxaloacetate, a four-carbon dicarboxylic acid source for the tricarboxylic acid cycle. This Medicago sativa (Alfalfa) protein is Phosphoenolpyruvate carboxylase (PEPC).